Here is a 98-residue protein sequence, read N- to C-terminus: Keratin-associated protein 3-3 (98 aa).

3 tandem repeats follow at residues 3–7 (CCASR), 47–51 (CCDNC), and 89–93 (CCEPC). The segment at 3 to 59 (CCASRGCSVPTGPATTICSSDKSCRCGVCLPSTCPHTVWLLEPTCCDNCPPPCHIPQ) is 3 X 5 AA repeats of C-C-X(3).

It belongs to the KRTAP type 3 family. In terms of assembly, interacts with hair keratins. As to expression, localized to the upper cortex of the hair shaft.

Its function is as follows. In the hair cortex, hair keratin intermediate filaments are embedded in an interfilamentous matrix, consisting of hair keratin-associated proteins (KRTAP), which are essential for the formation of a rigid and resistant hair shaft through their extensive disulfide bond cross-linking with abundant cysteine residues of hair keratins. The matrix proteins include the high-sulfur and high-glycine-tyrosine keratins. The sequence is that of Keratin-associated protein 3-3 (KRTAP3-3) from Homo sapiens (Human).